The following is a 268-amino-acid chain: Inositol polyphosphate multikinase (268 aa).

ATP is bound by residues Lys-27, 86-88, and Asp-99; that span reads ENI. 127–135 serves as a coordination point for substrate; it reads TSGSLGFRI. Asp-235 contributes to the ATP binding site.

This sequence belongs to the inositol phosphokinase (IPK) family.

The protein localises to the cytoplasm. Its subcellular location is the nucleus. It carries out the reaction 1D-myo-inositol 1,4,5-trisphosphate + 2 ATP = 1D-myo-inositol 1,3,4,5,6-pentakisphosphate + 2 ADP + 2 H(+). It catalyses the reaction 1D-myo-inositol 1,4,5-trisphosphate + ATP = 1D-myo-inositol 1,4,5,6-tetrakisphosphate + ADP + H(+). The catalysed reaction is 1D-myo-inositol 1,4,5-trisphosphate + ATP = 1D-myo-inositol 1,3,4,5-tetrakisphosphate + ADP + H(+). The enzyme catalyses 1D-myo-inositol 1,4,5,6-tetrakisphosphate + ATP = 1D-myo-inositol 1,3,4,5,6-pentakisphosphate + ADP + H(+). Inositol phosphate kinase with both monophosphoinositol and diphosphoinositol polyphosphate synthase activities. Able to phosphorylate inositol 1,4,5-trisphosphate (Ins(1,4,5)P3) on both the carbon-3 and carbon-6 positions to synthesize inositol 1,3,4,5-tetrakisphosphate (Ins(1,3,4,5)P4) and inositol 1,4,5,6-tetrakisphosphate (Ins(1,4,5,6)P4), and then to subsequently phosphorylate and convert either isomer of InsP4 to inositol 1,3,4,5,6-pentakisphosphate (Ins(1,3,4,5,6)P5). Also converts (Ins(1,3,4,5,6)P5) to InsP6. Also has a role in transcription regulation. The catalytic activity is required for PHO gene repression by phosphate and for NCR gene activation in response to nitrogen availability, indicating a role for inositol pyrophosphates in these controls. Inositol polyphosphates may be involved in the regulation of chromatin remodeling of transcription. The sequence is that of Inositol polyphosphate multikinase (arg82) from Schizosaccharomyces pombe (strain 972 / ATCC 24843) (Fission yeast).